Consider the following 273-residue polypeptide: tRNA (guanine-N(7)-)-methyltransferase (273 aa).

Residues 1–31 (MSQHPDINTNVDATSLTDDQKSLDTNATSGN) are compositionally biased toward polar residues. The interval 1–36 (MSQHPDINTNVDATSLTDDQKSLDTNATSGNEVAPD) is disordered. S-adenosyl-L-methionine-binding residues include glutamate 105, glutamate 130, aspartate 157, and aspartate 179. Aspartate 179 is a catalytic residue. Substrate is bound by residues lysine 183, aspartate 215, and 252–255 (TKFE).

This sequence belongs to the class I-like SAM-binding methyltransferase superfamily. TrmB family.

It catalyses the reaction guanosine(46) in tRNA + S-adenosyl-L-methionine = N(7)-methylguanosine(46) in tRNA + S-adenosyl-L-homocysteine. The protein operates within tRNA modification; N(7)-methylguanine-tRNA biosynthesis. Catalyzes the formation of N(7)-methylguanine at position 46 (m7G46) in tRNA. The polypeptide is tRNA (guanine-N(7)-)-methyltransferase (Psychrobacter cryohalolentis (strain ATCC BAA-1226 / DSM 17306 / VKM B-2378 / K5)).